The primary structure comprises 188 residues: Elongation factor P (188 aa).

This sequence belongs to the elongation factor P family.

It is found in the cytoplasm. It functions in the pathway protein biosynthesis; polypeptide chain elongation. Its function is as follows. Involved in peptide bond synthesis. Stimulates efficient translation and peptide-bond synthesis on native or reconstituted 70S ribosomes in vitro. Probably functions indirectly by altering the affinity of the ribosome for aminoacyl-tRNA, thus increasing their reactivity as acceptors for peptidyl transferase. This chain is Elongation factor P, found in Rickettsia akari (strain Hartford).